A 389-amino-acid polypeptide reads, in one-letter code: 3-ketoacyl-CoA thiolase (389 aa).

The Acyl-thioester intermediate role is filled by Cys91. Residues His343 and Cys373 each act as proton acceptor in the active site.

It belongs to the thiolase-like superfamily. Thiolase family. Heterotetramer of two alpha chains (FadB) and two beta chains (FadA).

The protein localises to the cytoplasm. The enzyme catalyses an acyl-CoA + acetyl-CoA = a 3-oxoacyl-CoA + CoA. Its pathway is lipid metabolism; fatty acid beta-oxidation. Functionally, catalyzes the final step of fatty acid oxidation in which acetyl-CoA is released and the CoA ester of a fatty acid two carbons shorter is formed. The protein is 3-ketoacyl-CoA thiolase of Pseudoalteromonas translucida (strain TAC 125).